Here is a 95-residue protein sequence, read N- to C-terminus: UPF0235 protein MS0322 (95 aa).

The protein belongs to the UPF0235 family.

The chain is UPF0235 protein MS0322 from Mannheimia succiniciproducens (strain KCTC 0769BP / MBEL55E).